The chain runs to 74 residues: U6-agatoxin-Ao1a (74 aa).

Residues 1-19 form the signal peptide; it reads MRFYIAFFFLLLAADMALS. The propeptide occupies 20-30; sequence FEIGNSEELER. 3 cysteine pairs are disulfide-bonded: C44–C56, C49–C61, and C55–C72.

In terms of tissue distribution, expressed by the venom gland.

It localises to the secreted. This chain is U6-agatoxin-Ao1a, found in Agelena orientalis (Funnel-web spider).